The following is a 406-amino-acid chain: Tyrosine--tRNA ligase (406 aa).

Position 35 (Tyr-35) interacts with L-tyrosine. The short motif at 40-49 is the 'HIGH' region element; the sequence is ATSTSLHIGH. Residues Tyr-166 and Gln-170 each contribute to the L-tyrosine site. Positions 226–230 match the 'KMSKS' region motif; it reads KMGKS. Lys-229 lines the ATP pocket. The S4 RNA-binding domain occupies 341–405; that stretch reads ILLVDLMVSS…IGKKKILRII (65 aa).

This sequence belongs to the class-I aminoacyl-tRNA synthetase family. TyrS type 1 subfamily. In terms of assembly, homodimer.

Its subcellular location is the cytoplasm. The enzyme catalyses tRNA(Tyr) + L-tyrosine + ATP = L-tyrosyl-tRNA(Tyr) + AMP + diphosphate + H(+). Functionally, catalyzes the attachment of tyrosine to tRNA(Tyr) in a two-step reaction: tyrosine is first activated by ATP to form Tyr-AMP and then transferred to the acceptor end of tRNA(Tyr). This Borrelia hermsii (strain HS1 / DAH) protein is Tyrosine--tRNA ligase.